A 507-amino-acid chain; its full sequence is Maturase K (507 aa).

This sequence belongs to the intron maturase 2 family. MatK subfamily.

It localises to the plastid. The protein resides in the chloroplast. In terms of biological role, usually encoded in the trnK tRNA gene intron. Probably assists in splicing its own and other chloroplast group II introns. In Lyonia lucida (Fetterbush), this protein is Maturase K.